The primary structure comprises 508 residues: Photosystem II CP47 reaction center protein (508 aa).

The next 6 helical transmembrane spans lie at 21-36, 101-115, 140-156, 203-218, 237-252, and 457-472; these read SVHI…WAGS, IMLS…IWHW, GIHL…FGAF, IAAG…FHLS, VLSS…AFVV, and SFAL…HGAR.

This sequence belongs to the PsbB/PsbC family. PsbB subfamily. As to quaternary structure, PSII is composed of 1 copy each of membrane proteins PsbA, PsbB, PsbC, PsbD, PsbE, PsbF, PsbH, PsbI, PsbJ, PsbK, PsbL, PsbM, PsbT, PsbX, PsbY, PsbZ, Psb30/Ycf12, at least 3 peripheral proteins of the oxygen-evolving complex and a large number of cofactors. It forms dimeric complexes. It depends on Binds multiple chlorophylls. PSII binds additional chlorophylls, carotenoids and specific lipids. as a cofactor.

Its subcellular location is the plastid. It is found in the chloroplast thylakoid membrane. Its function is as follows. One of the components of the core complex of photosystem II (PSII). It binds chlorophyll and helps catalyze the primary light-induced photochemical processes of PSII. PSII is a light-driven water:plastoquinone oxidoreductase, using light energy to abstract electrons from H(2)O, generating O(2) and a proton gradient subsequently used for ATP formation. The sequence is that of Photosystem II CP47 reaction center protein from Piper cenocladum (Ant piper).